Consider the following 229-residue polypeptide: Protein OPG034 (229 aa).

It belongs to the orthopoxvirus OPG034 family.

In Vaccinia virus (strain Western Reserve) (VACV), this protein is Protein OPG034 (OPG034).